The following is a 40-amino-acid chain: Small polypeptide DEVIL 6 (40 aa).

The required for DVL/RTFL small polypeptide activity stretch occupies residues Ser9–Asp40. The helical transmembrane segment at Arg12–Ile28 threads the bilayer.

This sequence belongs to the DVL/RTFL small polypeptides family.

It is found in the cell membrane. Functionally, small polypeptide acting as a regulatory molecule which coordinates cellular responses required for differentiation, growth and development, probably by restricting polar cell proliferation in lateral organs and coordinating socket cell recruitment and differentiation at trichome sites. The chain is Small polypeptide DEVIL 6 from Arabidopsis thaliana (Mouse-ear cress).